The sequence spans 66 residues: MAGQEQQSSSPREEEHEVADAPVPVPSSPQASAHTDGVDDLLDEIDGVLESNAEEFVRGFVQKGGQ.

Positions 1 to 10 (MAGQEQQSSS) are enriched in low complexity. The disordered stretch occupies residues 1 to 39 (MAGQEQQSSSPREEEHEVADAPVPVPSSPQASAHTDGVD). The tract at residues 23-60 (VPVPSSPQASAHTDGVDDLLDEIDGVLESNAEEFVRGF) is ARC ATPase binding. Deamidated glutamine is present on Q66. An Isoglutamyl lysine isopeptide (Gln-Lys) (interchain with K-? in acceptor proteins) cross-link involves residue Q66.

This sequence belongs to the prokaryotic ubiquitin-like protein family. Strongly interacts with the proteasome-associated ATPase ARC through a hydrophobic interface; the interacting region of Pup lies in its C-terminal half. There is one Pup binding site per ARC hexamer ring. Post-translationally, is modified by deamidation of its C-terminal glutamine to glutamate by the deamidase Dop, a prerequisite to the subsequent pupylation process.

It functions in the pathway protein degradation; proteasomal Pup-dependent pathway. Protein modifier that is covalently attached to lysine residues of substrate proteins, thereby targeting them for proteasomal degradation. The tagging system is termed pupylation. In Renibacterium salmoninarum (strain ATCC 33209 / DSM 20767 / JCM 11484 / NBRC 15589 / NCIMB 2235), this protein is Prokaryotic ubiquitin-like protein Pup.